The primary structure comprises 397 residues: Purine ribonucleoside efflux pump NepI (397 aa).

Over 1 to 21 (MNENIAEKFRADGVARPNWSA) the chain is Cytoplasmic. A helical membrane pass occupies residues 22-42 (VFAVAFCVACLITVEFLPVSL). Over 43–54 (LTPMAQDLGISE) the chain is Periplasmic. Residues 55–75 (GIAGQSVTVTAFVAMFSSLFI) traverse the membrane as a helical segment. The Cytoplasmic segment spans residues 76-85 (TQIIQATDRR). The helical transmembrane segment at 86–106 (YIVILFAVLLTASCLMVSFAN) threads the bilayer. S107 is a topological domain (periplasmic). The helical transmembrane segment at 108–128 (FTLLLLGRACLGLALGGFWAM) threads the bilayer. At 129–147 (SASLTMRLVPARTVPKALS) the chain is on the cytoplasmic side. A helical membrane pass occupies residues 148 to 168 (VIFGAVSIALVIAAPLGSFLG). Over 169-175 (GIIGWRN) the chain is Periplasmic. The helical transmembrane segment at 176–196 (VFNAAAVMGVLCVIWVVKSLP) threads the bilayer. Over 197–215 (SLPGEPSHQKQNMFSLLQR) the chain is Cytoplasmic. Residues 216–236 (PGVMAGMIAIFMSFAGQFAFF) traverse the membrane as a helical segment. At 237–255 (TYIRPVYMNLAGFDVDGLT) the chain is on the periplasmic side. A helical transmembrane segment spans residues 256–276 (LVLLSFGIASFVGTSFSSYVL). Topologically, residues 277–281 (KRSVK) are cytoplasmic. Residues 282–302 (LALAGAPLLLALSALTLIVWG) form a helical membrane-spanning segment. The Periplasmic segment spans residues 303-305 (SDK). Residues 306–326 (TVAAVIAIIWGLAFALVPVGW) form a helical membrane-spanning segment. Topologically, residues 327-343 (STWITRSLADQAEKAGS) are cytoplasmic. Residues 344-364 (IQVAVIQLANTCGAAVGGYAL) traverse the membrane as a helical segment. Residues 365-366 (DN) are Periplasmic-facing. The chain crosses the membrane as a helical span at residues 367 to 387 (FGLLSPLALSGCLMLLTALVV). The Cytoplasmic portion of the chain corresponds to 388–397 (AAKVRITPMS).

It belongs to the major facilitator superfamily. DHA1 family. NepI (TC 2.A.1.2.26) subfamily.

It localises to the cell inner membrane. It catalyses the reaction inosine(in) + H(+)(out) = inosine(out) + H(+)(in). The enzyme catalyses guanosine(in) + H(+)(out) = guanosine(out) + H(+)(in). Functionally, involved in the efflux of purine ribonucleosides, such as inosine and guanosine. The sequence is that of Purine ribonucleoside efflux pump NepI from Salmonella enteritidis PT4 (strain P125109).